The primary structure comprises 498 residues: 3-octaprenyl-4-hydroxybenzoate carboxy-lyase (498 aa).

Asparagine 175 serves as a coordination point for Mn(2+). Prenylated FMN is bound by residues 178-180, 192-194, and 197-198; these read IYR, RWL, and RG. Glutamate 241 provides a ligand contact to Mn(2+). The active-site Proton donor is the aspartate 290.

The protein belongs to the UbiD family. Homohexamer. It depends on prenylated FMN as a cofactor. The cofactor is Mn(2+).

The protein localises to the cell membrane. It carries out the reaction a 4-hydroxy-3-(all-trans-polyprenyl)benzoate + H(+) = a 2-(all-trans-polyprenyl)phenol + CO2. Its pathway is cofactor biosynthesis; ubiquinone biosynthesis. In terms of biological role, catalyzes the decarboxylation of 3-octaprenyl-4-hydroxy benzoate to 2-octaprenylphenol, an intermediate step in ubiquinone biosynthesis. The sequence is that of 3-octaprenyl-4-hydroxybenzoate carboxy-lyase from Yersinia pestis bv. Antiqua (strain Antiqua).